The primary structure comprises 546 residues: U3 small nucleolar RNA-associated protein 18 homolog (546 aa).

Disordered regions lie at residues 1–55, 94–118, and 177–205; these read MSLS…LEES, SAVRQIPDYEDDGDDDEELSDEENG, and NPGTDWARPDSQIVDGESSDDDDTQDGGV. Over residues 13-23 the composition is skewed to basic and acidic residues; sequence IKREELKKQYE. Residues 24–35 are compositionally biased toward acidic residues; the sequence is DVEDEEEIGSDD. The residue at position 33 (Ser-33) is a Phosphoserine. Residues 45 to 55 are compositionally biased toward basic and acidic residues; sequence TEKEKQKLEES. 2 stretches are compositionally biased toward acidic residues: residues 101-117 and 193-205; these read DYEDDGDDDEELSDEEN and ESSDDDDTQDGGV. WD repeat units follow at residues 242–281, 372–411, 413–454, and 509–545; these read PSNGPINSVHFHQNAQLLLTAGLDRRLRFFQIDGKRNTKI, KMNGSVRSLAFSEDGKHLLSSGGDGQVYVWDLRTMKCLYK, VDEG…GGKR, and STMHYPRCLDFSPGSGFMAMGNAAGKVLLYKLHHYQN. Positions 389–404 match the DWD box motif; that stretch reads LLSSGGDGQVYVWDLR.

The protein belongs to the WD repeat UTP18 family.

Its subcellular location is the nucleus. It localises to the nucleolus. In terms of biological role, involved in nucleolar processing of pre-18S ribosomal RNA. This chain is U3 small nucleolar RNA-associated protein 18 homolog, found in Arabidopsis thaliana (Mouse-ear cress).